We begin with the raw amino-acid sequence, 381 residues long: uncharacterized protein (381 aa).

2 helical membrane passes run 22 to 42 and 246 to 266; these read GVLLTLAAVAVVASIGTYLTA and LIPENVHWTIWQLWLVVLLVA.

Its subcellular location is the cell membrane. This is an uncharacterized protein from Mycobacterium tuberculosis (strain ATCC 25618 / H37Rv).